The following is a 229-amino-acid chain: Small ribosomal subunit protein uS3 (229 aa).

The KH type-2 domain maps to 18 to 87 (IDEYLAKQYY…NPQITITNVE (70 aa)).

The protein belongs to the universal ribosomal protein uS3 family. Part of the 30S ribosomal subunit.

Binds the lower part of the 30S subunit head. This chain is Small ribosomal subunit protein uS3, found in Saccharolobus solfataricus (strain ATCC 35092 / DSM 1617 / JCM 11322 / P2) (Sulfolobus solfataricus).